The chain runs to 216 residues: Endoplasmic reticulum vesicle protein 25 (216 aa).

The first 25 residues, 1 to 25 (MGSSRLAMRSALGLFFLLFVQISLA), serve as a signal peptide directing secretion. At 26-185 (LKFDIAAGKG…TNESTNERVK (160 aa)) the chain is on the lumenal side. In terms of domain architecture, GOLD spans 36-126 (ERCIRNFVLK…HRSIELDVDI (91 aa)). The helical transmembrane segment at 186–206 (WFAFGTMGMLVGLGVWQVIYL) threads the bilayer. At 207–216 (RAYFRSKHLI) the chain is on the cytoplasmic side.

It belongs to the EMP24/GP25L family.

The protein resides in the endoplasmic reticulum membrane. It localises to the golgi apparatus membrane. Constituent of COPII-coated endoplasmic reticulum-derived transport vesicles. Required for efficient transport of a subset of secretory proteins to the Golgi. Facilitates retrograde transport from the Golgi to the endoplasmic reticulum. The protein is Endoplasmic reticulum vesicle protein 25 (erv25) of Emericella nidulans (strain FGSC A4 / ATCC 38163 / CBS 112.46 / NRRL 194 / M139) (Aspergillus nidulans).